The primary structure comprises 429 residues: Adenylosuccinate synthetase (429 aa).

GTP contacts are provided by residues 12–18 and 40–42; these read GDEGKGK and GHT. Asp13 acts as the Proton acceptor in catalysis. Residues Asp13 and Gly40 each coordinate Mg(2+). IMP-binding positions include 13 to 16, 38 to 41, Thr129, Arg143, Gln224, Thr239, and Arg303; these read DEGK and NAGH. The active-site Proton donor is His41. Residue 299–305 coordinates substrate; the sequence is ATTGRRR. GTP-binding positions include Arg305, 331–333, and 413–415; these read KLD and SVG.

The protein belongs to the adenylosuccinate synthetase family. In terms of assembly, homodimer. The cofactor is Mg(2+).

The protein resides in the cytoplasm. It catalyses the reaction IMP + L-aspartate + GTP = N(6)-(1,2-dicarboxyethyl)-AMP + GDP + phosphate + 2 H(+). It participates in purine metabolism; AMP biosynthesis via de novo pathway; AMP from IMP: step 1/2. Plays an important role in the de novo pathway of purine nucleotide biosynthesis. Catalyzes the first committed step in the biosynthesis of AMP from IMP. In Desulforapulum autotrophicum (strain ATCC 43914 / DSM 3382 / VKM B-1955 / HRM2) (Desulfobacterium autotrophicum), this protein is Adenylosuccinate synthetase.